A 335-amino-acid chain; its full sequence is Syntaxin-18 (335 aa).

At 1–309 (MAVDITLLFR…EDIREAIKNN (309 aa)) the chain is on the cytoplasmic side. A compositionally biased stretch (basic and acidic residues) spans 168-208 (KLEPEPNTKTRESTSSEKVSRSPSKDSEENPATEERPEKIL). The interval 168 to 226 (KLEPEPNTKTRESTSSEKVSRSPSKDSEENPATEERPEKILAETQPELGTWGDGKGEDE) is disordered. The t-SNARE coiled-coil homology domain maps to 243–305 (IGEMNSLFDE…KEGNEDIREA (63 aa)). A helical; Anchor for type IV membrane protein membrane pass occupies residues 310–330 (AGFRVWILFFLVMCSFSLLFL). Over 331-335 (DWYDS) the chain is Vesicular.

Belongs to the syntaxin family. As to quaternary structure, component of a SNARE complex consisting of STX18, USE1L, BNIP1/SEC20L, and SEC22B. RINT1/TIP20L and ZW10 are associated with the complex through interaction with BNIP1/SEC20L. Interacts directly with USE1L and BNIP1/SEC20L.

Its subcellular location is the endoplasmic reticulum membrane. It localises to the golgi apparatus membrane. Syntaxin that may be involved in targeting and fusion of Golgi-derived retrograde transport vesicles with the ER. This chain is Syntaxin-18 (STX18), found in Pongo abelii (Sumatran orangutan).